The primary structure comprises 612 residues: UvrABC system protein C (612 aa).

In terms of domain architecture, GIY-YIG spans His15–Val93. The UVR domain occupies Ser203–Val238.

The protein belongs to the UvrC family. Interacts with UvrB in an incision complex.

The protein resides in the cytoplasm. Its function is as follows. The UvrABC repair system catalyzes the recognition and processing of DNA lesions. UvrC both incises the 5' and 3' sides of the lesion. The N-terminal half is responsible for the 3' incision and the C-terminal half is responsible for the 5' incision. In Haemophilus ducreyi (strain 35000HP / ATCC 700724), this protein is UvrABC system protein C.